Here is a 466-residue protein sequence, read N- to C-terminus: Methylenetetrahydrofolate--tRNA-(uracil-5-)-methyltransferase TrmFO (466 aa).

10-15 (GGGLAG) is an FAD binding site.

Belongs to the MnmG family. TrmFO subfamily. Requires FAD as cofactor.

Its subcellular location is the cytoplasm. It carries out the reaction uridine(54) in tRNA + (6R)-5,10-methylene-5,6,7,8-tetrahydrofolate + NADH + H(+) = 5-methyluridine(54) in tRNA + (6S)-5,6,7,8-tetrahydrofolate + NAD(+). It catalyses the reaction uridine(54) in tRNA + (6R)-5,10-methylene-5,6,7,8-tetrahydrofolate + NADPH + H(+) = 5-methyluridine(54) in tRNA + (6S)-5,6,7,8-tetrahydrofolate + NADP(+). Functionally, catalyzes the folate-dependent formation of 5-methyl-uridine at position 54 (M-5-U54) in all tRNAs. The protein is Methylenetetrahydrofolate--tRNA-(uracil-5-)-methyltransferase TrmFO of Phenylobacterium zucineum (strain HLK1).